Reading from the N-terminus, the 219-residue chain is Tritrans,polycis-undecaprenyl-diphosphate synthase (geranylgeranyl-diphosphate specific) (219 aa).

Asp-12 is a catalytic residue. Asp-12 provides a ligand contact to Mg(2+). Residues Gly-13–Arg-16, Trp-17, and Ser-59–Asp-61 contribute to the substrate site. Asn-62 serves as the catalytic Proton acceptor. Substrate contacts are provided by residues Arg-66, Arg-168, and Arg-174–Ser-176. Glu-187 provides a ligand contact to Mg(2+).

It belongs to the UPP synthase family. Homodimer. It depends on Mg(2+) as a cofactor.

It carries out the reaction geranylgeranyl diphosphate + 7 isopentenyl diphosphate = tri-trans,hepta-cis-undecaprenyl diphosphate + 7 diphosphate. Catalyzes the sequential condensation of isopentenyl diphosphate (IPP) with geranylgeranyl diphosphate (GGPP) to yield (2Z,6Z,10Z,14Z,18Z,22Z,26Z,30E,34E,38E)-undecaprenyl diphosphate (tritrans,heptacis-UPP). It is probably the precursor of glycosyl carrier lipids. The chain is Tritrans,polycis-undecaprenyl-diphosphate synthase (geranylgeranyl-diphosphate specific) from Aeropyrum pernix (strain ATCC 700893 / DSM 11879 / JCM 9820 / NBRC 100138 / K1).